The sequence spans 203 residues: Dephospho-CoA kinase (203 aa).

The region spanning 6–203 (ILGLTGGIGS…FYLTLRGGRA (198 aa)) is the DPCK domain. 14–19 (GSGKSA) is an ATP binding site.

This sequence belongs to the CoaE family.

The protein resides in the cytoplasm. It carries out the reaction 3'-dephospho-CoA + ATP = ADP + CoA + H(+). Its pathway is cofactor biosynthesis; coenzyme A biosynthesis; CoA from (R)-pantothenate: step 5/5. In terms of biological role, catalyzes the phosphorylation of the 3'-hydroxyl group of dephosphocoenzyme A to form coenzyme A. This is Dephospho-CoA kinase from Pseudomonas aeruginosa (strain ATCC 15692 / DSM 22644 / CIP 104116 / JCM 14847 / LMG 12228 / 1C / PRS 101 / PAO1).